The following is a 299-amino-acid chain: ATP phosphoribosyltransferase (299 aa).

The protein belongs to the ATP phosphoribosyltransferase family. Long subfamily. As to quaternary structure, equilibrium between an active dimeric form, an inactive hexameric form and higher aggregates. Interconversion between the various forms is largely reversible and is influenced by the natural substrates and inhibitors of the enzyme. The cofactor is Mg(2+).

It is found in the cytoplasm. The enzyme catalyses 1-(5-phospho-beta-D-ribosyl)-ATP + diphosphate = 5-phospho-alpha-D-ribose 1-diphosphate + ATP. Its pathway is amino-acid biosynthesis; L-histidine biosynthesis; L-histidine from 5-phospho-alpha-D-ribose 1-diphosphate: step 1/9. Its activity is regulated as follows. Feedback inhibited by histidine. Catalyzes the condensation of ATP and 5-phosphoribose 1-diphosphate to form N'-(5'-phosphoribosyl)-ATP (PR-ATP). Has a crucial role in the pathway because the rate of histidine biosynthesis seems to be controlled primarily by regulation of HisG enzymatic activity. This is ATP phosphoribosyltransferase from Buchnera aphidicola subsp. Baizongia pistaciae (strain Bp).